A 158-amino-acid polypeptide reads, in one-letter code: SsrA-binding protein (158 aa).

The tract at residues Asp135 to Asp158 is disordered. The segment covering Lys141 to Asp158 has biased composition (basic and acidic residues).

This sequence belongs to the SmpB family.

Its subcellular location is the cytoplasm. Its function is as follows. Required for rescue of stalled ribosomes mediated by trans-translation. Binds to transfer-messenger RNA (tmRNA), required for stable association of tmRNA with ribosomes. tmRNA and SmpB together mimic tRNA shape, replacing the anticodon stem-loop with SmpB. tmRNA is encoded by the ssrA gene; the 2 termini fold to resemble tRNA(Ala) and it encodes a 'tag peptide', a short internal open reading frame. During trans-translation Ala-aminoacylated tmRNA acts like a tRNA, entering the A-site of stalled ribosomes, displacing the stalled mRNA. The ribosome then switches to translate the ORF on the tmRNA; the nascent peptide is terminated with the 'tag peptide' encoded by the tmRNA and targeted for degradation. The ribosome is freed to recommence translation, which seems to be the essential function of trans-translation. The protein is SsrA-binding protein of Psychrobacter arcticus (strain DSM 17307 / VKM B-2377 / 273-4).